The sequence spans 429 residues: Histidine--tRNA ligase (429 aa).

It belongs to the class-II aminoacyl-tRNA synthetase family. As to quaternary structure, homodimer.

It localises to the cytoplasm. It carries out the reaction tRNA(His) + L-histidine + ATP = L-histidyl-tRNA(His) + AMP + diphosphate + H(+). This is Histidine--tRNA ligase from Pseudomonas syringae pv. tomato (strain ATCC BAA-871 / DC3000).